The following is a 136-amino-acid chain: Acidic phospholipase A2 EC-I (136 aa).

An N-terminal signal peptide occupies residues 1–16; it reads MKTLWIVAVWLIAVEG. 7 cysteine pairs are disulfide-bonded: cysteine 42/cysteine 129, cysteine 44/cysteine 60, cysteine 59/cysteine 111, cysteine 65/cysteine 136, cysteine 66/cysteine 104, cysteine 73/cysteine 97, and cysteine 91/cysteine 102. Ca(2+) is bound by residues tyrosine 43, glycine 45, and glycine 47. Histidine 63 is an active-site residue. Aspartate 64 contributes to the Ca(2+) binding site. Residue aspartate 105 is part of the active site. Residues 112 to 133 form a may be responsible for inhibition of the platelet-aggregation activity region; sequence LGENVNTYDKKYKSYEDCTEEV.

This sequence belongs to the phospholipase A2 family. Group II subfamily. D49 sub-subfamily. Monomer. Ca(2+) serves as cofactor. As to expression, expressed by the venom gland.

It is found in the secreted. It catalyses the reaction a 1,2-diacyl-sn-glycero-3-phosphocholine + H2O = a 1-acyl-sn-glycero-3-phosphocholine + a fatty acid + H(+). Functionally, snake venom phospholipase A2 (PLA2) that inhibits human platelet aggregation induced by ADP, collagen and epinephrin (possibly by binding the platelet receptor alpha-IIb/beta-III) and induces mild edema in the foot pads of mice. PLA2 catalyzes the calcium-dependent hydrolysis of the 2-acyl groups in 3-sn-phosphoglycerides. The protein is Acidic phospholipase A2 EC-I of Echis carinatus (Saw-scaled viper).